The sequence spans 282 residues: Putative 4-diphosphocytidyl-2-C-methyl-D-erythritol kinase (282 aa).

Residue lysine 9 is part of the active site. Residue 93-103 coordinates ATP; sequence PVSAGLAGGSA. Residue aspartate 135 is part of the active site.

Belongs to the GHMP kinase family. IspE subfamily.

The enzyme catalyses 4-CDP-2-C-methyl-D-erythritol + ATP = 4-CDP-2-C-methyl-D-erythritol 2-phosphate + ADP + H(+). Its function is as follows. Catalyzes the phosphorylation of the position 2 hydroxy group of 4-diphosphocytidyl-2C-methyl-D-erythritol. The chain is Putative 4-diphosphocytidyl-2-C-methyl-D-erythritol kinase from Staphylococcus aureus (strain MRSA252).